Consider the following 631-residue polypeptide: uncharacterized protein (631 aa).

A compositionally biased stretch (polar residues) spans 1-19; that stretch reads MSKMGSSSMGELQDGITQE. Residues 1 to 92 form a disordered region; sequence MSKMGSSSMG…EENYPRLQTT (92 aa). A compositionally biased stretch (basic residues) spans 67–76; sequence KKKKKKKLKK. The Exonuclease domain maps to 277–426; it reads LAIDCEMVRT…EDALACVDLL (150 aa). Positions 517-526 are enriched in polar residues; that stretch reads ANRNTKQENN. Residues 517 to 540 form a disordered region; sequence ANRNTKQENNSDTDTENDSVEEDQ. Residues 527–540 are compositionally biased toward acidic residues; the sequence is SDTDTENDSVEEDQ.

Belongs to the REXO1/REXO3 family.

Its subcellular location is the nucleus. This is an uncharacterized protein from Schizosaccharomyces pombe (strain 972 / ATCC 24843) (Fission yeast).